A 709-amino-acid chain; its full sequence is DNA ligase (709 aa).

The tract at residues 1-20 is disordered; that stretch reads MTATHRGAQADASAPAGPLP. NAD(+)-binding positions include 52 to 56, 101 to 102, and glutamate 146; these read DAEYD and SL. Lysine 148 functions as the N6-AMP-lysine intermediate in the catalytic mechanism. The NAD(+) site is built by arginine 169, glutamate 205, lysine 322, and lysine 346. Cysteine 440, cysteine 443, cysteine 458, and cysteine 464 together coordinate Zn(2+). A BRCT domain is found at 623-709; it reads KAPAPLSGKT…AEAGAAPAQE (87 aa).

It belongs to the NAD-dependent DNA ligase family. LigA subfamily. The cofactor is Mg(2+). Mn(2+) is required as a cofactor.

It catalyses the reaction NAD(+) + (deoxyribonucleotide)n-3'-hydroxyl + 5'-phospho-(deoxyribonucleotide)m = (deoxyribonucleotide)n+m + AMP + beta-nicotinamide D-nucleotide.. Its function is as follows. DNA ligase that catalyzes the formation of phosphodiester linkages between 5'-phosphoryl and 3'-hydroxyl groups in double-stranded DNA using NAD as a coenzyme and as the energy source for the reaction. It is essential for DNA replication and repair of damaged DNA. This chain is DNA ligase, found in Cupriavidus necator (strain ATCC 17699 / DSM 428 / KCTC 22496 / NCIMB 10442 / H16 / Stanier 337) (Ralstonia eutropha).